Reading from the N-terminus, the 405-residue chain is Protein held out wings (405 aa).

In terms of domain architecture, KH spans 142–210 (YVPVREHPDF…HLSDDLHVLI (69 aa)).

Homodimer. Interacts with Sxl; promoting nuclear retention of msl-2 transcripts. In terms of tissue distribution, during embryogenesis, expression is seen in mesodermal precursors of somatic, visceral and pharyngeal muscle. Later in embryogenesis, expression is restricted to heart and muscle attachment sites of the epidermis. During onset of metamorphosis, expression is seen in muscle and muscle attachment cells.

The protein resides in the nucleus. In terms of biological role, RNA-binding protein involved in muscle development and dosage compensation. Vital role in steroid regulation of muscle development and to control heart rate. Required during embryogenesis, in late stages of somatic muscle development, for myotube migration and during metamorphosis for muscle reorganization. Required for integrin-mediated cell-adhesion in wing blade. Together with Sxl, acts as an inhibitor of dosage compensation in females by preventing production of msl-2 protein, an essential component of the MSL complex. Specifically binds to the 5'-UTR of msl-2 transcripts and cooperates with Sxl to promote nuclear retention of msl-2 mRNAs. In Drosophila melanogaster (Fruit fly), this protein is Protein held out wings (how).